The sequence spans 547 residues: Chaperonin GroEL (547 aa).

ATP is bound by residues 30–33 (TLGP), K51, 87–91 (DGTTT), G415, and D495.

It belongs to the chaperonin (HSP60) family. As to quaternary structure, forms a cylinder of 14 subunits composed of two heptameric rings stacked back-to-back. Interacts with the co-chaperonin GroES.

The protein localises to the cytoplasm. The enzyme catalyses ATP + H2O + a folded polypeptide = ADP + phosphate + an unfolded polypeptide.. Together with its co-chaperonin GroES, plays an essential role in assisting protein folding. The GroEL-GroES system forms a nano-cage that allows encapsulation of the non-native substrate proteins and provides a physical environment optimized to promote and accelerate protein folding. The chain is Chaperonin GroEL from Pasteurella multocida (strain Pm70).